Here is a 190-residue protein sequence, read N- to C-terminus: Inosine triphosphate pyrophosphatase (190 aa).

Residue 8 to 13 coordinates ITP; the sequence is TGNANK. Glu-37 contacts Mg(2+). ITP contacts are provided by residues Lys-49, 65–66, Lys-82, 140–143, Lys-163, and 168–169; these read DT, FGWD, and HR.

The protein belongs to the HAM1 NTPase family. In terms of assembly, homodimer. It depends on Mg(2+) as a cofactor. Requires Mn(2+) as cofactor.

It is found in the cytoplasm. The protein localises to the nucleus. It carries out the reaction ITP + H2O = IMP + diphosphate + H(+). It catalyses the reaction dITP + H2O = dIMP + diphosphate + H(+). The catalysed reaction is XTP + H2O = XMP + diphosphate + H(+). Pyrophosphatase that hydrolyzes non-canonical purine nucleotides such as inosine triphosphate (ITP), deoxyinosine triphosphate (dITP) or xanthosine 5'-triphosphate (XTP) to their respective monophosphate derivatives. The enzyme does not distinguish between the deoxy- and ribose forms. Probably excludes non-canonical purines from RNA and DNA precursor pools, thus preventing their incorporation into RNA and DNA and avoiding chromosomal lesions. This chain is Inosine triphosphate pyrophosphatase, found in Batrachochytrium dendrobatidis (strain JAM81 / FGSC 10211) (Frog chytrid fungus).